The sequence spans 127 residues: Auxin-responsive protein SAUR76 (127 aa).

The segment at S20 to V40 is disordered.

The protein belongs to the ARG7 family. In terms of tissue distribution, expressed in cotyledons, hypocotyls and roots of young seedlings. Expressed in emerging lateral root, leaves, flowers, stamens and filaments.

It is found in the nucleus. It localises to the cytoplasm. The protein resides in the cell membrane. Its function is as follows. May be involved in the regulation of ethylene receptor signaling. Promotes cell expansion and plant growth. Involved in the regulation of cell elongation. This Arabidopsis thaliana (Mouse-ear cress) protein is Auxin-responsive protein SAUR76.